A 120-amino-acid polypeptide reads, in one-letter code: Small ribosomal subunit protein bS6 (120 aa).

A disordered region spans residues 93–120; it reads KKADTAPSSMMKTVEREEARKASQTEQA. Over residues 105 to 120 the composition is skewed to basic and acidic residues; it reads TVEREEARKASQTEQA.

Belongs to the bacterial ribosomal protein bS6 family.

Functionally, binds together with bS18 to 16S ribosomal RNA. The chain is Small ribosomal subunit protein bS6 from Delftia acidovorans (strain DSM 14801 / SPH-1).